A 125-amino-acid chain; its full sequence is Programmed cell death protein 5 (125 aa).

The residue at position 2 (Ala2) is an N-acetylalanine. The disordered stretch occupies residues 16–36 (ELQAKHGDPGDAAQQEAKHRE). At Ser51 the chain carries Phosphoserine. Lys63 carries the N6-acetyllysine modification. A Phosphoserine modification is found at Ser119.

Belongs to the PDCD5 family. Widely expressed. Highest levels in heart, testis, kidney, pituitary gland, adrenal gland and placenta.

Functionally, may function in the process of apoptosis. This Homo sapiens (Human) protein is Programmed cell death protein 5 (PDCD5).